Consider the following 143-residue polypeptide: Large-conductance mechanosensitive channel (143 aa).

A run of 3 helical transmembrane segments spans residues 21-41 (VGVIIGAAFGKIVDSIVADII), 44-64 (VVGLVFGKLDFSNLYVVLGTV), and 86-106 (GNFITIAVNFVILAFIIFMMV).

It belongs to the MscL family. In terms of assembly, homopentamer.

The protein localises to the cell inner membrane. Its function is as follows. Channel that opens in response to stretch forces in the membrane lipid bilayer. May participate in the regulation of osmotic pressure changes within the cell. The protein is Large-conductance mechanosensitive channel of Variovorax paradoxus (strain S110).